Here is a 187-residue protein sequence, read N- to C-terminus: Lipoprotein signal peptidase (187 aa).

3 consecutive transmembrane segments (helical) span residues 12 to 32 (VAVF…TKMW), 68 to 88 (MTWL…VLAV), and 91 to 111 (ISMK…GNLI). Residues D127 and D140 contribute to the active site. A helical membrane pass occupies residues 141-161 (IFLMLAGVAAVLLLFLGEPFS). A disordered region spans residues 167–187 (EANGKTLGDDANATDDGAKAA).

Belongs to the peptidase A8 family.

It localises to the cell membrane. The enzyme catalyses Release of signal peptides from bacterial membrane prolipoproteins. Hydrolyzes -Xaa-Yaa-Zaa-|-(S,diacylglyceryl)Cys-, in which Xaa is hydrophobic (preferably Leu), and Yaa (Ala or Ser) and Zaa (Gly or Ala) have small, neutral side chains.. Its pathway is protein modification; lipoprotein biosynthesis (signal peptide cleavage). Functionally, this protein specifically catalyzes the removal of signal peptides from prolipoproteins. The chain is Lipoprotein signal peptidase from Bifidobacterium adolescentis (strain ATCC 15703 / DSM 20083 / NCTC 11814 / E194a).